Consider the following 1465-residue polypeptide: DNA polymerase III PolC-type (1465 aa).

Positions 427 to 583 (YVVFDVETTG…YDAEATGRLL (157 aa)) constitute an Exonuclease domain.

This sequence belongs to the DNA polymerase type-C family. PolC subfamily.

It is found in the cytoplasm. The enzyme catalyses DNA(n) + a 2'-deoxyribonucleoside 5'-triphosphate = DNA(n+1) + diphosphate. In terms of biological role, required for replicative DNA synthesis. This DNA polymerase also exhibits 3' to 5' exonuclease activity. This is DNA polymerase III PolC-type from Streptococcus pyogenes serotype M1.